The primary structure comprises 121 residues: Small ribosomal subunit protein uS13 (121 aa).

A disordered region spans residues 91 to 121 (HRMSLPVRGQRTRTNARTRRGSRKTVAGRKK). Residues 100-121 (QRTRTNARTRRGSRKTVAGRKK) are compositionally biased toward basic residues.

Belongs to the universal ribosomal protein uS13 family. Part of the 30S ribosomal subunit. Forms a loose heterodimer with protein S19. Forms two bridges to the 50S subunit in the 70S ribosome.

Functionally, located at the top of the head of the 30S subunit, it contacts several helices of the 16S rRNA. In the 70S ribosome it contacts the 23S rRNA (bridge B1a) and protein L5 of the 50S subunit (bridge B1b), connecting the 2 subunits; these bridges are implicated in subunit movement. Contacts the tRNAs in the A and P-sites. This is Small ribosomal subunit protein uS13 from Prochlorococcus marinus (strain MIT 9312).